Consider the following 223-residue polypeptide: Coiled-coil domain-containing protein 70 (223 aa).

Residues Asn129–Trp153 adopt a coiled-coil conformation. A disordered region spans residues Glu199–Ala223. Positions Gln203–Ala223 are enriched in polar residues.

The chain is Coiled-coil domain-containing protein 70 from Mus musculus (Mouse).